The primary structure comprises 493 residues: UDP-N-acetylmuramate--L-alanine ligase (493 aa).

112-118 contributes to the ATP binding site; sequence GTHGKTT.

The protein belongs to the MurCDEF family.

The protein resides in the cytoplasm. The enzyme catalyses UDP-N-acetyl-alpha-D-muramate + L-alanine + ATP = UDP-N-acetyl-alpha-D-muramoyl-L-alanine + ADP + phosphate + H(+). It participates in cell wall biogenesis; peptidoglycan biosynthesis. Cell wall formation. The sequence is that of UDP-N-acetylmuramate--L-alanine ligase from Nitrosospira multiformis (strain ATCC 25196 / NCIMB 11849 / C 71).